A 175-amino-acid chain; its full sequence is Large ribosomal subunit protein uL10 (175 aa).

Belongs to the universal ribosomal protein uL10 family. In terms of assembly, part of the ribosomal stalk of the 50S ribosomal subunit. The N-terminus interacts with L11 and the large rRNA to form the base of the stalk. The C-terminus forms an elongated spine to which L12 dimers bind in a sequential fashion forming a multimeric L10(L12)X complex.

In terms of biological role, forms part of the ribosomal stalk, playing a central role in the interaction of the ribosome with GTP-bound translation factors. This chain is Large ribosomal subunit protein uL10, found in Mycolicibacterium smegmatis (strain ATCC 700084 / mc(2)155) (Mycobacterium smegmatis).